The following is a 475-amino-acid chain: Pyruvate kinase (475 aa).

Arginine 33 is a binding site for substrate. K(+) is bound by residues asparagine 35, serine 37, and aspartate 67. Residue 35–38 coordinates ATP; it reads NFSH. The ATP site is built by arginine 74 and lysine 155. Glutamate 220 contributes to the Mg(2+) binding site. Glycine 243, aspartate 244, and threonine 276 together coordinate substrate. Aspartate 244 is a binding site for Mg(2+).

It belongs to the pyruvate kinase family. Homotetramer. Mg(2+) is required as a cofactor. The cofactor is K(+).

The enzyme catalyses pyruvate + ATP = phosphoenolpyruvate + ADP + H(+). It functions in the pathway carbohydrate degradation; glycolysis; pyruvate from D-glyceraldehyde 3-phosphate: step 5/5. This chain is Pyruvate kinase (pyk), found in Corynebacterium glutamicum (strain ATCC 13032 / DSM 20300 / JCM 1318 / BCRC 11384 / CCUG 27702 / LMG 3730 / NBRC 12168 / NCIMB 10025 / NRRL B-2784 / 534).